A 93-amino-acid polypeptide reads, in one-letter code: Stromal cell-derived factor 1 (93 aa).

Residues 1–21 (MDAKVVAVLALVLAALCLSDG) form the signal peptide. The Receptor activation motif motif lies at 22–23 (KP). The receptor and heparin binding stretch occupies residues 29 to 33 (RCPCR). Intrachain disulfides connect cysteine 30–cysteine 55 and cysteine 32–cysteine 71. Receptor binding regions lie at residues 39–41 (VAR), 48–50 (KIL), and 60–70 (VARLKNNNRQV). Heparin-binding positions include 41–51 (RANVKHLKILN), arginine 62, glutamine 69, and lysine 85.

Belongs to the intercrine alpha (chemokine CxC) family. In terms of assembly, monomer or homodimer; in equilibrium. Dimer formation is induced by non acidic pH and the presence of multivalent anions, and by binding to CXCR4 or heparin. Monomeric form is required for full chemotactic activity and resistance to ischemia/reperfusion injury, whereas the dimeric form acts as a partial agonist of CXCR4, stimulating Ca2+ mobilization but with no chemotactic activity and instead acts as a selective antagonist that blocks chemotaxis induced by the monomeric form. Interacts with the N-terminus of ACKR3. Interacts with integrin subunit ITGB3 (via the allosteric site (site 2)). Interacts with TNFAIP6 (via Link domain).

It localises to the secreted. Functionally, chemoattractant active on T-lymphocytes and monocytes but not neutrophils. Activates the C-X-C chemokine receptor CXCR4 to induce a rapid and transient rise in the level of intracellular calcium ions and chemotaxis. Also binds to atypical chemokine receptor ACKR3, which activates the beta-arrestin pathway and acts as a scavenger receptor for SDF-1. Acts as a positive regulator of monocyte migration and a negative regulator of monocyte adhesion via the LYN kinase. Binds to the allosteric site (site 2) of integrins and activates integrins ITGAV:ITGB3, ITGA4:ITGB1 and ITGA5:ITGB1 in a CXCR4-independent manner. Stimulates migration of monocytes and T-lymphocytes through its receptors, CXCR4 and ACKR3, and decreases monocyte adherence to surfaces coated with ICAM-1, a ligand for beta-2 integrins. SDF1A/CXCR4 signaling axis inhibits beta-2 integrin LFA-1 mediated adhesion of monocytes to ICAM-1 through LYN kinase. Plays a protective role after myocardial infarction. Has several critical functions during embryonic development; required for B-cell lymphopoiesis, myelopoiesis in bone marrow and heart ventricular septum formation. Stimulates the proliferation of bone marrow-derived B-cell progenitors in the presence of IL7 as well as growth of stromal cell-dependent pre-B-cells. The sequence is that of Stromal cell-derived factor 1 (CXCL12) from Felis catus (Cat).